Reading from the N-terminus, the 134-residue chain is MDLRTGEYITAHQATSGVYTFGITNPLYFTITRHNQNPFNNKYNTLTFQIRFNHNLRKELGIHKCFLNFHIWTTLQSPTGHFLRVFKYQVCKYLNNLGVISLNNVVRAVDYVLFHVFERTIDVTENHEIKFNFY.

This sequence belongs to the geminiviridae replication enhancer protein family. Homooligomer. Interacts with the replication-associated protein (REP). Interacts with host proliferating cell nuclear antigen (PCNA). Interacts with host retinoblastoma-related protein 1 (RBR1), and may thereby deregulate the host cell cycle. Oligomerization and interaction with PCNA are necessary for optimal replication enhancement.

Its function is as follows. Increases viral DNA accumulation. Enhances infectivity and symptom expression. The sequence is that of Replication enhancer protein from Tomato yellow leaf curl Sardinia virus (TYLCSV).